Here is a 274-residue protein sequence, read N- to C-terminus: Eukaryotic translation initiation factor 3 subunit J (274 aa).

Disordered regions lie at residues 1 to 120 (MSGK…DLKH) and 227 to 246 (EEKAAEKGGKKSKAAKTKTS). Over residues 30–50 (DEEGNESDVLDSWDAAEDSEV) the composition is skewed to acidic residues. The stretch at 46–112 (EDSEVEREKA…AERRERLRRE (67 aa)) forms a coiled coil. Composition is skewed to basic and acidic residues over residues 51–67 (EREKAKKAAEAKAKAEA) and 79–92 (RIAERQAERARQLA). The span at 93-102 (EDSDAEEETE) shows a compositional bias: acidic residues. The span at 103–120 (AERRERLRREQKESDLKH) shows a compositional bias: basic and acidic residues.

The protein belongs to the eIF-3 subunit J family. As to quaternary structure, component of the eukaryotic translation initiation factor 3 (eIF-3) complex.

It is found in the cytoplasm. Component of the eukaryotic translation initiation factor 3 (eIF-3) complex, which is involved in protein synthesis of a specialized repertoire of mRNAs and, together with other initiation factors, stimulates binding of mRNA and methionyl-tRNAi to the 40S ribosome. The eIF-3 complex specifically targets and initiates translation of a subset of mRNAs involved in cell proliferation. This is Eukaryotic translation initiation factor 3 subunit J (hcr-1) from Neurospora crassa (strain ATCC 24698 / 74-OR23-1A / CBS 708.71 / DSM 1257 / FGSC 987).